Consider the following 425-residue polypeptide: Serine--tRNA ligase (425 aa).

Position 230-232 (230-232 (TAE)) interacts with L-serine. Residue 261 to 263 (RSE) coordinates ATP. Glu284 serves as a coordination point for L-serine. 348–351 (EISS) contacts ATP. Residue Ser384 coordinates L-serine.

Belongs to the class-II aminoacyl-tRNA synthetase family. Type-1 seryl-tRNA synthetase subfamily. Homodimer. The tRNA molecule binds across the dimer.

The protein resides in the cytoplasm. It catalyses the reaction tRNA(Ser) + L-serine + ATP = L-seryl-tRNA(Ser) + AMP + diphosphate + H(+). It carries out the reaction tRNA(Sec) + L-serine + ATP = L-seryl-tRNA(Sec) + AMP + diphosphate + H(+). It participates in aminoacyl-tRNA biosynthesis; selenocysteinyl-tRNA(Sec) biosynthesis; L-seryl-tRNA(Sec) from L-serine and tRNA(Sec): step 1/1. In terms of biological role, catalyzes the attachment of serine to tRNA(Ser). Is also able to aminoacylate tRNA(Sec) with serine, to form the misacylated tRNA L-seryl-tRNA(Sec), which will be further converted into selenocysteinyl-tRNA(Sec). The sequence is that of Serine--tRNA ligase from Streptococcus pyogenes serotype M5 (strain Manfredo).